The chain runs to 351 residues: Cell division protein FtsZ (351 aa).

Residues 31 to 35, 118 to 120, Glu-149, Arg-153, and Asp-197 contribute to the GTP site; these read GAGNN and GTG.

It belongs to the FtsZ family. In terms of assembly, homodimer. Polymerizes to form a dynamic ring structure in a strictly GTP-dependent manner. Interacts directly with several other division proteins. Interacts with FtsA.

Its subcellular location is the cytoplasm. Functionally, essential cell division protein that forms a contractile ring structure (Z ring) at the future cell division site. The regulation of the ring assembly controls the timing and the location of cell division. One of the functions of the FtsZ ring is to recruit other cell division proteins to the septum to produce a new cell wall between the dividing cells. Binds GTP and shows GTPase activity. In Thermotoga maritima (strain ATCC 43589 / DSM 3109 / JCM 10099 / NBRC 100826 / MSB8), this protein is Cell division protein FtsZ.